Reading from the N-terminus, the 741-residue chain is Multifunctional procollagen lysine hydroxylase and glycosyltransferase LH3 (741 aa).

Positions 1-27 (MAASVPEPRLLLLLLLLLPPLPPVTSA) are cleaved as a signal peptide. The segment at 28-293 (SDRPRGANPV…FCNLNRRTLP (266 aa)) is required for glycosyltransferase activity. 47–49 (VAT) contributes to the UDP binding site. N66 is a glycosylation site (N-linked (GlcNAc...) asparagine). 3 residues coordinate Mn(2+): D115, D118, and H256. 115 to 117 (DSY) provides a ligand contact to UDP. 259–262 (GPTK) contributes to the UDP binding site. 2 disulfide bridges follow: C282–C285 and C382–C388. The accessory region stretch occupies residues 298 to 523 (PPRVLLAVFV…EFGRLLSTSH (226 aa)). N551 is a glycosylation site (N-linked (GlcNAc...) asparagine). A disulfide bond links C566 and C701. 2 residues coordinate 2-oxoglutarate: R602 and Y659. The Fe2OG dioxygenase domain maps to 650 to 741 (RAVMNFVVRY…RYIMVSFVDP (92 aa)). Positions 670 and 672 each coordinate Fe cation. The interval 675-718 (TFTLNVALNHKGVDYEGGGCRFLRYDCRVSSPRKGWALLHPGRL) is important for dimerization. N679 provides a ligand contact to 2-oxoglutarate. Residue H722 coordinates Fe cation. R732 lines the 2-oxoglutarate pocket.

Homodimer. It depends on Fe(2+) as a cofactor. Requires L-ascorbate as cofactor. The cofactor is Mn(2+). As to expression, detected in heart and bone.

It is found in the rough endoplasmic reticulum. The protein localises to the endoplasmic reticulum lumen. It localises to the endoplasmic reticulum membrane. Its subcellular location is the secreted. The protein resides in the extracellular space. The catalysed reaction is L-lysyl-[collagen] + 2-oxoglutarate + O2 = (5R)-5-hydroxy-L-lysyl-[collagen] + succinate + CO2. It carries out the reaction (5R)-5-hydroxy-L-lysyl-[collagen] + UDP-alpha-D-galactose = (5R)-5-O-(beta-D-galactosyl)-5-hydroxy-L-lysyl-[collagen] + UDP + H(+). The enzyme catalyses (5R)-5-O-(beta-D-galactosyl)-5-hydroxy-L-lysyl-[collagen] + UDP-alpha-D-glucose = (5R)-5-O-[alpha-D-glucosyl-(1-&gt;2)-beta-D-galactosyl]-5-hydroxy-L-lysyl-[collagen] + UDP + H(+). In terms of biological role, multifunctional enzyme that catalyzes a series of post-translational modifications on Lys residues in procollagen. Plays a redundant role in catalyzing the formation of hydroxylysine residues in -Xaa-Lys-Gly- sequences in collagens. Plays a redundant role in catalyzing the transfer of galactose onto hydroxylysine groups, giving rise to galactosyl 5-hydroxylysine. Has an essential role by catalyzing the subsequent transfer of glucose moieties, giving rise to 1,2-glucosylgalactosyl-5-hydroxylysine residues. Catalyzes hydroxylation and glycosylation of Lys residues in the MBL1 collagen-like domain, giving rise to hydroxylysine and 1,2-glucosylgalactosyl-5-hydroxylysine residues. Catalyzes hydroxylation and glycosylation of Lys residues in the ADIPOQ collagen-like domain, giving rise to hydroxylysine and 1,2-glucosylgalactosyl-5-hydroxylysine residues. Essential for normal biosynthesis and secretion of type IV collagens. Essential for normal formation of basement membranes. The chain is Multifunctional procollagen lysine hydroxylase and glycosyltransferase LH3 (Plod3) from Rattus norvegicus (Rat).